A 359-amino-acid chain; its full sequence is Small ribosomal subunit biogenesis GTPase RsgA (359 aa).

Positions Lys101–Val259 constitute a CP-type G domain. GTP-binding positions include Asn149–Asp152 and Gly201–Thr209. Residues Cys284, Cys289, His291, and Cys297 each coordinate Zn(2+). The interval Asp331–Lys359 is disordered. A compositionally biased stretch (basic residues) spans Leu349–Lys359.

Belongs to the TRAFAC class YlqF/YawG GTPase family. RsgA subfamily. As to quaternary structure, monomer. Associates with 30S ribosomal subunit, binds 16S rRNA. Zn(2+) is required as a cofactor.

Its subcellular location is the cytoplasm. Functionally, one of several proteins that assist in the late maturation steps of the functional core of the 30S ribosomal subunit. Helps release RbfA from mature subunits. May play a role in the assembly of ribosomal proteins into the subunit. Circularly permuted GTPase that catalyzes slow GTP hydrolysis, GTPase activity is stimulated by the 30S ribosomal subunit. The protein is Small ribosomal subunit biogenesis GTPase RsgA of Leptospira interrogans serogroup Icterohaemorrhagiae serovar copenhageni (strain Fiocruz L1-130).